The primary structure comprises 237 residues: Uridylate kinase (237 aa).

10-13 (KFSG) is a binding site for ATP. The involved in allosteric activation by GTP stretch occupies residues 18-23 (GDSGFG). Residue G52 participates in UMP binding. ATP is bound by residues G53 and R57. UMP-binding positions include D73 and 134-141 (TGNPFFTT). Positions 161, 167, and 170 each coordinate ATP.

It belongs to the UMP kinase family. Homohexamer.

Its subcellular location is the cytoplasm. It catalyses the reaction UMP + ATP = UDP + ADP. It participates in pyrimidine metabolism; CTP biosynthesis via de novo pathway; UDP from UMP (UMPK route): step 1/1. With respect to regulation, allosterically activated by GTP. Inhibited by UTP. In terms of biological role, catalyzes the reversible phosphorylation of UMP to UDP. The sequence is that of Uridylate kinase from Campylobacter hominis (strain ATCC BAA-381 / DSM 21671 / CCUG 45161 / LMG 19568 / NCTC 13146 / CH001A).